A 745-amino-acid polypeptide reads, in one-letter code: TonB-dependent heme receptor A (745 aa).

The first 24 residues, 1 to 24, serve as a signal peptide directing secretion; sequence MNILINKRIFLLVTLVGIQLNVTA. The region spanning 45-157 is the TBDR plug domain; the sequence is DDSNKLPGRS…FAGTVKFETK (113 aa). Positions 168 to 745 constitute a TBDR beta-barrel domain; the sequence is KIGGFLKYGN…NIKFSLSQKF (578 aa).

This sequence belongs to the TonB-dependent receptor family.

It is found in the cell outer membrane. Its function is as follows. Heme receptor. This chain is TonB-dependent heme receptor A (tdhA), found in Haemophilus influenzae (strain 86-028NP).